The sequence spans 341 residues: tRNA N6-adenosine threonylcarbamoyltransferase (341 aa).

H115 and H119 together coordinate Fe cation. Residues 137 to 141 (IVSGG), D170, G183, D187, and N276 each bind substrate. D304 is a binding site for Fe cation.

It belongs to the KAE1 / TsaD family. Fe(2+) serves as cofactor.

It localises to the cytoplasm. It carries out the reaction L-threonylcarbamoyladenylate + adenosine(37) in tRNA = N(6)-L-threonylcarbamoyladenosine(37) in tRNA + AMP + H(+). Its function is as follows. Required for the formation of a threonylcarbamoyl group on adenosine at position 37 (t(6)A37) in tRNAs that read codons beginning with adenine. Is involved in the transfer of the threonylcarbamoyl moiety of threonylcarbamoyl-AMP (TC-AMP) to the N6 group of A37, together with TsaE and TsaB. TsaD likely plays a direct catalytic role in this reaction. This Staphylococcus aureus (strain MSSA476) protein is tRNA N6-adenosine threonylcarbamoyltransferase.